The chain runs to 229 residues: Large ribosomal subunit protein uL1 (229 aa).

This sequence belongs to the universal ribosomal protein uL1 family. In terms of assembly, part of the 50S ribosomal subunit.

Its function is as follows. Binds directly to 23S rRNA. The L1 stalk is quite mobile in the ribosome, and is involved in E site tRNA release. Protein L1 is also a translational repressor protein, it controls the translation of the L11 operon by binding to its mRNA. The chain is Large ribosomal subunit protein uL1 from Lactococcus lactis subsp. cremoris (strain MG1363).